Here is a 759-residue protein sequence, read N- to C-terminus: Phosphoribosylformylglycinamidine synthase subunit PurL (759 aa).

His-46 is a catalytic residue. 2 residues coordinate ATP: Tyr-49 and Lys-88. A Mg(2+)-binding site is contributed by Glu-90. Residues 91–94 (SHNH) and Arg-113 contribute to the substrate site. His-92 acts as the Proton acceptor in catalysis. Asp-114 contributes to the Mg(2+) binding site. Gln-237 is a substrate binding site. Asp-265 serves as a coordination point for Mg(2+). Residue 309-311 (ESQ) coordinates substrate. The ATP site is built by Asp-498 and Gly-535. Asn-536 contributes to the Mg(2+) binding site. Ser-538 is a substrate binding site.

Belongs to the FGAMS family. Monomer. Part of the FGAM synthase complex composed of 1 PurL, 1 PurQ and 2 PurS subunits.

The protein localises to the cytoplasm. The catalysed reaction is N(2)-formyl-N(1)-(5-phospho-beta-D-ribosyl)glycinamide + L-glutamine + ATP + H2O = 2-formamido-N(1)-(5-O-phospho-beta-D-ribosyl)acetamidine + L-glutamate + ADP + phosphate + H(+). It functions in the pathway purine metabolism; IMP biosynthesis via de novo pathway; 5-amino-1-(5-phospho-D-ribosyl)imidazole from N(2)-formyl-N(1)-(5-phospho-D-ribosyl)glycinamide: step 1/2. Part of the phosphoribosylformylglycinamidine synthase complex involved in the purines biosynthetic pathway. Catalyzes the ATP-dependent conversion of formylglycinamide ribonucleotide (FGAR) and glutamine to yield formylglycinamidine ribonucleotide (FGAM) and glutamate. The FGAM synthase complex is composed of three subunits. PurQ produces an ammonia molecule by converting glutamine to glutamate. PurL transfers the ammonia molecule to FGAR to form FGAM in an ATP-dependent manner. PurS interacts with PurQ and PurL and is thought to assist in the transfer of the ammonia molecule from PurQ to PurL. This is Phosphoribosylformylglycinamidine synthase subunit PurL from Anaeromyxobacter sp. (strain K).